Consider the following 438-residue polypeptide: MPKPIVAIIGRPNVGKSTLFNRITGGRVAIVEDTPGVTRDRLYRDAEWCGRQFTLVDTGGIATHQDDPLVARVRSQAEQALKEADVIIFLVDSRTGITADDEEIAALLRRSDRPVILVANKVEDFSDPTVTHEFYRLGLGDPVPISAAHGLNTGDLLDRVVELLPAVPAGEEGDALKVAIVGRPNVGKSSLVNRLLGEERVIVSDLPGTTRDAVDTYIRRGEREYILIDTAGMRRKSRITVPTERYSVLRALRAVERADVVLVILDGTEGVTEQDKKIAGYGHEKGKATIIVVNKWDLVPKDERTMDHYREAVRQELSFMAYAPVLFISALTGQRVDQVLMTIDAVGEAANRRVATGTLNAVVREAVLLTPPPSVKGQEVKIYYATQVKVKPPTFVFFTNRPEGVHFSYQRYLENQLRQAFGFEGTPIRLIFRRGRER.

EngA-type G domains lie at 4 to 168 and 176 to 351; these read PIVA…PAVP and LKVA…EAAN. GTP-binding positions include 10–17, 57–61, 120–123, 182–189, 229–233, and 294–297; these read GRPNVGKS, DTGGI, NKVE, DTAGM, and NKWD. The 85-residue stretch at 352 to 436 folds into the KH-like domain; the sequence is RRVATGTLNA…PIRLIFRRGR (85 aa).

This sequence belongs to the TRAFAC class TrmE-Era-EngA-EngB-Septin-like GTPase superfamily. EngA (Der) GTPase family. Associates with the 50S ribosomal subunit.

In terms of biological role, GTPase that plays an essential role in the late steps of ribosome biogenesis. This chain is GTPase Der, found in Moorella thermoacetica (strain ATCC 39073 / JCM 9320).